Reading from the N-terminus, the 648-residue chain is Biosynthetic arginine decarboxylase (648 aa).

At Lys-109 the chain carries N6-(pyridoxal phosphate)lysine. A substrate-binding site is contributed by 291–301 (IDVGGGLGIDF).

It belongs to the Orn/Lys/Arg decarboxylase class-II family. SpeA subfamily. Requires Mg(2+) as cofactor. Pyridoxal 5'-phosphate is required as a cofactor.

The enzyme catalyses L-arginine + H(+) = agmatine + CO2. It participates in amine and polyamine biosynthesis; agmatine biosynthesis; agmatine from L-arginine: step 1/1. Functionally, catalyzes the biosynthesis of agmatine from arginine. The protein is Biosynthetic arginine decarboxylase of Prochlorococcus marinus (strain MIT 9312).